The following is a 546-amino-acid chain: MKILFATLLVVTTPHLVTGQIHWGNLSKIGVVGTGSASYKVMTQSSHQTLVIKLMPNITAIDNCTKTEIEEYKRLLGTVLQPIKVALNAITKNIKPIRSSTTSRRHRRFAGVALAGAALGVATAAQITAGIALHQSMMNTQAIESLKASLETTNQAIEEIRQAGQEMILAVQGVQDYINNELVPAMGQLSCDIVGQKLGLKLLRYYTEILSLFGPSLRDPISAEISIQALSYALGGDINKILEKLGYSGSDLLAILESKGIKAKITYVDIESYFIVLSIAYPSLSEIKGVIIHALEGVSYNIGSQEWYTTVPRYVATQGYLISNFDDTPCAFTPEGTICSQNALYPMSPLLQECFRGSTRSCARTLVSGSIGNRFILSKGNLIANCASILCKCYTTGSIISQDPDKILTYIAADQCPIVEVDGVTIQVGSREYPDAVYLHKIDLGPPISLEKLDVGTNLGNAVTKLEKAKDLLDSSDLILETIKGASVTNTGHILVGAGLIAVVGILIVTCCCRKRSNDSKVSTVILNPGLKPDLTGTSKSYVRSL.

The N-terminal stretch at 1–19 is a signal peptide; it reads MKILFATLLVVTTPHLVTG. At 20–491 the chain is on the extracellular side; it reads QIHWGNLSKI…TIKGASVTNT (472 aa). N-linked (GlcNAc...) asparagine; by host glycans are attached at residues Asn25, Asn57, and Asn63. Residues 109-133 are fusion peptide; that stretch reads FAGVALAGAALGVATAAQITAGIAL. A coiled-coil region spans residues 134-162; that stretch reads HQSMMNTQAIESLKASLETTNQAIEEIRQ. Disulfide bonds link Cys330–Cys339, Cys354–Cys362, Cys386–Cys391, and Cys393–Cys416. Residues 458–483 adopt a coiled-coil conformation; that stretch reads NLGNAVTKLEKAKDLLDSSDLILETI. Residues 492-512 form a helical membrane-spanning segment; sequence GHILVGAGLIAVVGILIVTCC. Residues 513 to 546 are Cytoplasmic-facing; that stretch reads CRKRSNDSKVSTVILNPGLKPDLTGTSKSYVRSL.

Belongs to the paramyxoviruses fusion glycoprotein family. Homotrimer of disulfide-linked F1-F2. Post-translationally, the inactive precursor F0 is glycosylated and proteolytically cleaved into F1 and F2 to be functionally active. The cleavage is mediated by cellular proteases during the transport and maturation of the polypeptide.

It localises to the virion membrane. The protein resides in the host cell membrane. Class I viral fusion protein. Under the current model, the protein has at least 3 conformational states: pre-fusion native state, pre-hairpin intermediate state, and post-fusion hairpin state. During viral and plasma cell membrane fusion, the heptad repeat (HR) regions assume a trimer-of-hairpins structure, positioning the fusion peptide in close proximity to the C-terminal region of the ectodomain. The formation of this structure appears to drive apposition and subsequent fusion of viral and plasma cell membranes. Directs fusion of viral and cellular membranes leading to delivery of the nucleocapsid into the cytoplasm. This fusion is pH independent and occurs directly at the outer cell membrane. The trimer of F1-F2 (F protein) probably interacts with HN at the virion surface. Upon HN binding to its cellular receptor, the hydrophobic fusion peptide is unmasked and interacts with the cellular membrane, inducing the fusion between cell and virion membranes. Later in infection, F proteins expressed at the plasma membrane of infected cells could mediate fusion with adjacent cells to form syncytia, a cytopathic effect that could lead to tissue necrosis. This Rinderpest virus (strain Kabete O) (RDV) protein is Fusion glycoprotein F0 (F).